A 122-amino-acid chain; its full sequence is Large ribosomal subunit protein uL14 (122 aa).

It belongs to the universal ribosomal protein uL14 family. Part of the 50S ribosomal subunit. Forms a cluster with proteins L3 and L19. In the 70S ribosome, L14 and L19 interact and together make contacts with the 16S rRNA in bridges B5 and B8.

Binds to 23S rRNA. Forms part of two intersubunit bridges in the 70S ribosome. In Protochlamydia amoebophila (strain UWE25), this protein is Large ribosomal subunit protein uL14.